Consider the following 265-residue polypeptide: MGQKTNPNGLRLGIIRTWESKRYADQKDVPALIKEDALIREFLNENFSKAGVSQIEIERVKAKSKERVTIKLYVSKPGIALGKEASVKNKAVSNLEYLTKKEVILNIIEVRRPEKVAVLVAQSIAEQLENRASFRRAQKMAIQRALKSGAKGIRTLVSGRLGGAEMARSEGYSEGRVPLHTLRADVDYATAEASTTYGILGIKVWIYHGEVLPGQSILDTRKPFEAGNQRRGQKRRPRNDQPVKDLNKEKEIARRTNYYVNAKKN.

Residues I39–R111 enclose the KH type-2 domain. The tract at residues F224–K250 is disordered. A compositionally biased stretch (basic and acidic residues) spans R238–K250.

It belongs to the universal ribosomal protein uS3 family. Part of the 30S ribosomal subunit. Forms a tight complex with proteins S10 and S14.

Its function is as follows. Binds the lower part of the 30S subunit head. Binds mRNA in the 70S ribosome, positioning it for translation. The protein is Small ribosomal subunit protein uS3 of Acholeplasma laidlawii.